Consider the following 648-residue polypeptide: Transcriptional regulator ManR (648 aa).

PRD domains are found at residues Lys-187–Gln-292 and Leu-297–Ser-404. Residues His-222, His-281, His-334, and His-393 each carry the phosphohistidine; by HPr modification. The 92-residue stretch at Lys-409–Arg-500 folds into the PTS EIIB type-2 domain. Cys-415 is modified (phosphocysteine; by EIIA). Residues Asn-510–Tyr-648 enclose the PTS EIIA type-2 domain. His-570 carries the phosphohistidine; by EIIB modification.

Belongs to the transcriptional antiterminator BglG family.

The enzyme catalyses D-mannose(out) + N(pros)-phospho-L-histidyl-[protein] = D-mannose 6-phosphate(in) + L-histidyl-[protein]. With respect to regulation, the regulatory activity of ManR is modulated by phosphorylation and dephosphorylation of the various ManR domains. It becomes activated via phosphoryl group transfer from PEP, EI and HPr on the two conserved histidine residues in the PRD 2 domain, whereas phosphorylation of the EIIA-like domain on His-570 by the PTS EIIB-Man domain of ManP inactivates ManR. Positively regulates the expression of the mannose operon that consists of three genes, manP, manA, and yjdF, which are responsible for the transport and utilization of mannose. Also activates its own expression. The protein is Transcriptional regulator ManR (manR) of Bacillus subtilis (strain 168).